A 248-amino-acid polypeptide reads, in one-letter code: Ubiquinone/menaquinone biosynthesis C-methyltransferase UbiE (248 aa).

S-adenosyl-L-methionine contacts are provided by residues Thr71, Asp92, and 120 to 121; that span reads DA.

It belongs to the class I-like SAM-binding methyltransferase superfamily. MenG/UbiE family.

The catalysed reaction is a 2-demethylmenaquinol + S-adenosyl-L-methionine = a menaquinol + S-adenosyl-L-homocysteine + H(+). The enzyme catalyses a 2-methoxy-6-(all-trans-polyprenyl)benzene-1,4-diol + S-adenosyl-L-methionine = a 5-methoxy-2-methyl-3-(all-trans-polyprenyl)benzene-1,4-diol + S-adenosyl-L-homocysteine + H(+). Its pathway is quinol/quinone metabolism; menaquinone biosynthesis; menaquinol from 1,4-dihydroxy-2-naphthoate: step 2/2. It participates in cofactor biosynthesis; ubiquinone biosynthesis. In terms of biological role, methyltransferase required for the conversion of demethylmenaquinol (DMKH2) to menaquinol (MKH2) and the conversion of 2-polyprenyl-6-methoxy-1,4-benzoquinol (DDMQH2) to 2-polyprenyl-3-methyl-6-methoxy-1,4-benzoquinol (DMQH2). This chain is Ubiquinone/menaquinone biosynthesis C-methyltransferase UbiE, found in Methylococcus capsulatus (strain ATCC 33009 / NCIMB 11132 / Bath).